Consider the following 439-residue polypeptide: Exosome complex component RRP45 (439 aa).

The segment at 1-268 (MKETPLSNCE…AEITELILKA (268 aa)) is ARE binding. Ser65 carries the phosphoserine modification. Lys297 is modified (N6-acetyllysine; alternate). Residue Lys297 forms a Glycyl lysine isopeptide (Lys-Gly) (interchain with G-Cter in SUMO1); alternate linkage. Lys297 participates in a covalent cross-link: Glycyl lysine isopeptide (Lys-Gly) (interchain with G-Cter in SUMO2); alternate. A phosphoserine mark is found at Ser306, Val325, Ser327, and Ser346. 2 disordered regions span residues 335 to 363 (GTAQIGEGVENSWGDLEDSEKEDDEGGGD) and 391 to 439 (LSDS…RAAN). A compositionally biased stretch (acidic residues) spans 349–361 (DLEDSEKEDDEGG). Residues Ser392, Ser394, Lys409, and Ile411 each carry the phosphoserine modification. Lys419 participates in a covalent cross-link: Glycyl lysine isopeptide (Lys-Gly) (interchain with G-Cter in SUMO2). The segment covering 425 to 439 (SKKPVKRRKKKRAAN) has biased composition (basic residues).

The protein belongs to the RNase PH family. Component of the RNA exosome core complex (Exo-9), composed of EXOSC1, EXOSC2, EXOSC3, EXOSC4, EXOSC5, EXOSC6, EXOSC7, EXOSC8 and EXOSC9; within the complex interacts with EXOSC3, EXOSC4, EXOSC5 and DIS3. The catalytically inactive RNA exosome core complex (Exo-9) associates with the catalytic subunit EXOSC10/RRP6. Exo-9 may associate with DIS3 to form the nucleolar exosome complex, or DIS3L to form the cytoplasmic exosome complex. Exo-9 is formed by a hexameric base ring consisting of the heterodimers EXOSC4-EXOSC9, EXOSC5-EXOSC8 and EXOSC6-EXOSC7, and a cap ring consisting of EXOSC1, EXOSC2 and EXOSC3. The RNA exosome complex associates with cofactors C1D/RRP47, MPHOSPH6/MPP6 and MTREX/MTR4. Interacts (via C-terminus region) with SETX (via N-terminus domain); the interaction enhances SETX sumoylation. Interacts with DIS3; the interaction is direct.

The protein resides in the cytoplasm. It localises to the nucleus. It is found in the nucleolus. The protein localises to the nucleoplasm. Non-catalytic component of the RNA exosome complex which has 3'-&gt;5' exoribonuclease activity and participates in a multitude of cellular RNA processing and degradation events. In the nucleus, the RNA exosome complex is involved in proper maturation of stable RNA species such as rRNA, snRNA and snoRNA, in the elimination of RNA processing by-products and non-coding 'pervasive' transcripts, such as antisense RNA species and promoter-upstream transcripts (PROMPTs), and of mRNAs with processing defects, thereby limiting or excluding their export to the cytoplasm. The RNA exosome may be involved in Ig class switch recombination (CSR) and/or Ig variable region somatic hypermutation (SHM) by targeting AICDA deamination activity to transcribed dsDNA substrates. In the cytoplasm, the RNA exosome complex is involved in general mRNA turnover and specifically degrades inherently unstable mRNAs containing AU-rich elements (AREs) within their 3' untranslated regions, and in RNA surveillance pathways, preventing translation of aberrant mRNAs. It seems to be involved in degradation of histone mRNA. The catalytic inactive RNA exosome core complex of 9 subunits (Exo-9) is proposed to play a pivotal role in the binding and presentation of RNA for ribonucleolysis, and to serve as a scaffold for the association with catalytic subunits and accessory proteins or complexes. EXOSC9 binds to ARE-containing RNAs. The protein is Exosome complex component RRP45 (EXOSC9) of Homo sapiens (Human).